Reading from the N-terminus, the 381-residue chain is Transcriptional regulatory protein FlgR (381 aa).

In terms of domain architecture, Response regulatory spans 2–113; the sequence is KIAIVEDDIN…LLLESIYRTK (112 aa). 4-aspartylphosphate is present on Asp-51. Residues 136–365 form the Sigma-54 factor interaction domain; sequence FLAASKALEE…LLGVVERAAI (230 aa). Residues 164-171 and 227-236 contribute to the ATP site; these read GESGVGKE and ANKGTIFLDE.

In terms of processing, phosphorylated by FlgS.

Functionally, member of the two-component regulatory system FlgR/FlgS that induces the transcriptional induction of the genes needed in motility and flagellar biogenesis. Upon phosphorylation by FlgS, functions as a transcriptional regulator and activates transcription of RpoN-dependent flagellar genes. This Helicobacter pylori (strain ATCC 700392 / 26695) (Campylobacter pylori) protein is Transcriptional regulatory protein FlgR (flgR).